The primary structure comprises 191 residues: Probable GTP-binding protein EngB (191 aa).

Residues 19–188 enclose the EngB-type G domain; the sequence is NIPEICFMGR…HKKIFELFVE (170 aa). GTP-binding positions include 27–34, 53–57, 70–73, 136–139, and 167–169; these read GRSNVGKS, GRTQL, DLPG, NKFD, and AST. Serine 34 and threonine 55 together coordinate Mg(2+).

The protein belongs to the TRAFAC class TrmE-Era-EngA-EngB-Septin-like GTPase superfamily. EngB GTPase family. The cofactor is Mg(2+).

Its function is as follows. Necessary for normal cell division and for the maintenance of normal septation. The sequence is that of Probable GTP-binding protein EngB from Mycoplasma genitalium (strain ATCC 33530 / DSM 19775 / NCTC 10195 / G37) (Mycoplasmoides genitalium).